The primary structure comprises 437 residues: Nickel-cobalt-cadmium resistance protein NccC (437 aa).

The first 48 residues, 1 to 48, serve as a signal peptide directing secretion; sequence MGAVLKAEANIFRSHPFRPMNQATPKKLRSAPCIGVALLLMATGSIQA.

Belongs to the outer membrane factor (OMF) (TC 1.B.17) family.

Component of the NCC cation-efflux system that confers resistance to nickel, cobalt and cadmium. The polypeptide is Nickel-cobalt-cadmium resistance protein NccC (nccC) (Alcaligenes xylosoxydans xylosoxydans (Achromobacter xylosoxidans)).